The primary structure comprises 307 residues: Myeloid-associated differentiation marker-like protein 2 (307 aa).

MARVEL domains lie at 17–154 (AVTS…ARPG) and 159–303 (YMAT…RIRF). Helical transmembrane passes span 53–73 (FCMA…ACEF), 90–110 (AFAM…PLYF), 129–149 (LAAS…VALT), 163–183 (VSGL…GALV), 198–218 (VAVY…SVMG), 229–249 (RLVV…AVIW), and 278–298 (LVVA…LAYS).

Belongs to the MAL family.

It is found in the membrane. The sequence is that of Myeloid-associated differentiation marker-like protein 2 (MYADML2) from Homo sapiens (Human).